We begin with the raw amino-acid sequence, 640 residues long: MSARPDTPLLDTVSYPEDLRKLEPGQLRQLSDELRAEMISAVGVTGGHLGSGLGVVELTAAIHYVFNTPEDRLIWDVGHQCYPHKILTGRRDRIRTLRQGGGLSGFTKRSESEYDPFGAAHSSTSISAGLGFAVANKLKGEPGKAIAVIGDGAMSAGMAYEAMNNAEQAGNRLIVILNDNDMSIAPPVGGLSGYLARLMSSSEYLGLRSLASRMTAKVSRRVHTSLGKAEEYTKGLVTGGTLFEELGFYYVGPIDGHNLDHLIPVLENVRDAEEGPFLIHVRTVKGKGYAPAENSADKYHGVAKFDVVTGEQKKSTGGPPAYQNVFGETLAKLADSDPRICAITAAMPSGTGVDKFAKAHPDRAFDVGIAEQHGVTFAAGLAAQGMRPFAAIYSTFLQRAYDQVVHDVAIQNLPVRFAIDRAGLVGADGSTHAGSFDVTYLATLPNFVVMAAADEAELVHMTYTAAEHDSGPIAFRYPRGGGIGIDLPETPEKLEIGKGRIVKHGSKVALLSLGTRLEEAKRAADELEAKGLSTTIADMRFAKPLDTELIAQLMKNHEVVVTIEEASIGGLGAHVLTYASDEGLTDAGLKIRTMRLPDAFIEQDAPEKQYDEAGLTAPHIVDTVLKALRQNSAGVEEARA.

Residues His-79 and 120–122 each bind thiamine diphosphate; that span reads AHS. Asp-151 contacts Mg(2+). Thiamine diphosphate contacts are provided by residues 152-153, Asn-180, Tyr-289, and Glu-371; that span reads GA. Position 180 (Asn-180) interacts with Mg(2+).

The protein belongs to the transketolase family. DXPS subfamily. Homodimer. Requires Mg(2+) as cofactor. It depends on thiamine diphosphate as a cofactor.

The catalysed reaction is D-glyceraldehyde 3-phosphate + pyruvate + H(+) = 1-deoxy-D-xylulose 5-phosphate + CO2. It participates in metabolic intermediate biosynthesis; 1-deoxy-D-xylulose 5-phosphate biosynthesis; 1-deoxy-D-xylulose 5-phosphate from D-glyceraldehyde 3-phosphate and pyruvate: step 1/1. Its function is as follows. Catalyzes the acyloin condensation reaction between C atoms 2 and 3 of pyruvate and glyceraldehyde 3-phosphate to yield 1-deoxy-D-xylulose-5-phosphate (DXP). This Erythrobacter litoralis (strain HTCC2594) protein is 1-deoxy-D-xylulose-5-phosphate synthase.